We begin with the raw amino-acid sequence, 91 residues long: DNA-directed RNA polymerase subunit omega (91 aa).

It belongs to the RNA polymerase subunit omega family. The RNAP catalytic core consists of 2 alpha, 1 beta, 1 beta' and 1 omega subunit. When a sigma factor is associated with the core the holoenzyme is formed, which can initiate transcription.

The enzyme catalyses RNA(n) + a ribonucleoside 5'-triphosphate = RNA(n+1) + diphosphate. Its function is as follows. Promotes RNA polymerase assembly. Latches the N- and C-terminal regions of the beta' subunit thereby facilitating its interaction with the beta and alpha subunits. The protein is DNA-directed RNA polymerase subunit omega of Edwardsiella ictaluri (strain 93-146).